Reading from the N-terminus, the 562-residue chain is Serine palmitoyltransferase 2 (562 aa).

A helical membrane pass occupies residues 61-81 (LITYLNYLILIILGHIHDFLG). An N6-(pyridoxal phosphate)lysine modification is found at K365.

The protein belongs to the class-II pyridoxal-phosphate-dependent aminotransferase family. Pyridoxal 5'-phosphate serves as cofactor.

It localises to the membrane. The enzyme catalyses L-serine + hexadecanoyl-CoA + H(+) = 3-oxosphinganine + CO2 + CoA. Its pathway is lipid metabolism; sphingolipid metabolism. The chain is Serine palmitoyltransferase 2 (LCB2) from Kluyveromyces lactis (strain ATCC 8585 / CBS 2359 / DSM 70799 / NBRC 1267 / NRRL Y-1140 / WM37) (Yeast).